The primary structure comprises 341 residues: Glucokinase (341 aa).

Glycine 18 to threonine 23 provides a ligand contact to ATP.

It belongs to the bacterial glucokinase family.

It localises to the cytoplasm. It carries out the reaction D-glucose + ATP = D-glucose 6-phosphate + ADP + H(+). The protein is Glucokinase of Rhizobium johnstonii (strain DSM 114642 / LMG 32736 / 3841) (Rhizobium leguminosarum bv. viciae).